Consider the following 246-residue polypeptide: Deoxycytidylate 5-hydroxymethyltransferase (246 aa).

Cysteine 148 is a catalytic residue.

It belongs to the thymidylate synthase family.

The enzyme catalyses dCMP + (6R)-5,10-methylene-5,6,7,8-tetrahydrofolate + H2O = 5-hydroxymethyl-dCMP + (6S)-5,6,7,8-tetrahydrofolate. The polypeptide is Deoxycytidylate 5-hydroxymethyltransferase (42) (Enterobacteria phage T6 (Bacteriophage T6)).